Here is a 160-residue protein sequence, read N- to C-terminus: Transcription elongation factor GreA (160 aa).

A coiled-coil region spans residues 1-72 (MAEKTYPMTQ…QIQILETKIR (72 aa)).

It belongs to the GreA/GreB family.

Necessary for efficient RNA polymerase transcription elongation past template-encoded arresting sites. The arresting sites in DNA have the property of trapping a certain fraction of elongating RNA polymerases that pass through, resulting in locked ternary complexes. Cleavage of the nascent transcript by cleavage factors such as GreA or GreB allows the resumption of elongation from the new 3'terminus. GreA releases sequences of 2 to 3 nucleotides. The chain is Transcription elongation factor GreA from Streptococcus agalactiae serotype Ia (strain ATCC 27591 / A909 / CDC SS700).